Consider the following 161-residue polypeptide: RNA pyrophosphohydrolase (161 aa).

In terms of domain architecture, Nudix hydrolase spans 6-149; the sequence is GYRPNVGIIL…KKDVYRRALK (144 aa). The Nudix box signature appears at 38 to 59; sequence GGIKSDETPEEALFRELKEEVG.

It belongs to the Nudix hydrolase family. RppH subfamily. Requires a divalent metal cation as cofactor.

Functionally, accelerates the degradation of transcripts by removing pyrophosphate from the 5'-end of triphosphorylated RNA, leading to a more labile monophosphorylated state that can stimulate subsequent ribonuclease cleavage. This Marinomonas sp. (strain MWYL1) protein is RNA pyrophosphohydrolase.